Reading from the N-terminus, the 339-residue chain is Dihydroorotate dehydrogenase (quinone) (339 aa).

Residues 64–68 (AGADK) and Thr-88 each bind FMN. Position 68 (Lys-68) interacts with substrate. 113-117 (NRNGF) is a substrate binding site. Residues Asn-141 and Asn-174 each coordinate FMN. Asn-174 serves as a coordination point for substrate. The active-site Nucleophile is Ser-177. Asn-179 is a binding site for substrate. Lys-219 and Thr-247 together coordinate FMN. 248-249 (NT) is a binding site for substrate. FMN contacts are provided by residues Gly-270, Gly-299, and 320–321 (YS).

The protein belongs to the dihydroorotate dehydrogenase family. Type 2 subfamily. As to quaternary structure, monomer. The cofactor is FMN.

It localises to the cell membrane. It catalyses the reaction (S)-dihydroorotate + a quinone = orotate + a quinol. The protein operates within pyrimidine metabolism; UMP biosynthesis via de novo pathway; orotate from (S)-dihydroorotate (quinone route): step 1/1. In terms of biological role, catalyzes the conversion of dihydroorotate to orotate with quinone as electron acceptor. In Pasteurella multocida (strain Pm70), this protein is Dihydroorotate dehydrogenase (quinone) (pyrD).